A 637-amino-acid chain; its full sequence is 1-deoxy-D-xylulose-5-phosphate synthase (637 aa).

Thiamine diphosphate contacts are provided by residues histidine 72 and 113–115; that span reads GHA. Residue aspartate 144 participates in Mg(2+) binding. Thiamine diphosphate is bound by residues 145–146, asparagine 174, tyrosine 287, and glutamate 370; that span reads GA. A Mg(2+)-binding site is contributed by asparagine 174.

Belongs to the transketolase family. DXPS subfamily. In terms of assembly, homodimer. Mg(2+) serves as cofactor. The cofactor is thiamine diphosphate.

It carries out the reaction D-glyceraldehyde 3-phosphate + pyruvate + H(+) = 1-deoxy-D-xylulose 5-phosphate + CO2. The protein operates within metabolic intermediate biosynthesis; 1-deoxy-D-xylulose 5-phosphate biosynthesis; 1-deoxy-D-xylulose 5-phosphate from D-glyceraldehyde 3-phosphate and pyruvate: step 1/1. Its function is as follows. Catalyzes the acyloin condensation reaction between C atoms 2 and 3 of pyruvate and glyceraldehyde 3-phosphate to yield 1-deoxy-D-xylulose-5-phosphate (DXP). This Prochlorococcus marinus subsp. pastoris (strain CCMP1986 / NIES-2087 / MED4) protein is 1-deoxy-D-xylulose-5-phosphate synthase.